Reading from the N-terminus, the 128-residue chain is Protein Wnt-2b-B (128 aa).

Cystine bridges form between Cys-3–Cys-16 and Cys-5–Cys-11. Ser-8 carries the O-palmitoleoyl serine; by PORCN lipid modification. An N-linked (GlcNAc...) asparagine glycan is attached at Asn-48. Intrachain disulfides connect Cys-90/Cys-105 and Cys-127/Cys-128.

Belongs to the Wnt family. In terms of processing, palmitoleoylation is required for efficient binding to frizzled receptors. Depalmitoleoylation leads to Wnt signaling pathway inhibition.

Its subcellular location is the secreted. The protein localises to the extracellular space. It is found in the extracellular matrix. In terms of biological role, ligand for members of the frizzled family of seven transmembrane receptors. Functions in the canonical Wnt/beta-catenin signaling pathway. In Xenopus laevis (African clawed frog), this protein is Protein Wnt-2b-B (wnt2b-b).